The primary structure comprises 396 residues: Squamosa promoter-binding-like protein 10 (396 aa).

The interval 74-104 (QSTSINSSSPEDKRCNLASQSSPGDSSSNID) is disordered. A compositionally biased stretch (polar residues) spans 90–104 (LASQSSPGDSSSNID). The segment at 173–250 (VPRCQIDGCE…SHHNARRRKP (78 aa)) adopts an SBP-type zinc-finger fold. Positions 176, 181, 198, 201, 217, 220, 224, and 236 each coordinate Zn(2+). The Bipartite nuclear localization signal motif lies at 233-249 (KRSCRKRLSHHNARRRK).

The cofactor is Zn(2+).

Its subcellular location is the nucleus. Its function is as follows. Trans-acting factor that binds specifically to the consensus nucleotide sequence 5'-TNCGTACAA-3'. This is Squamosa promoter-binding-like protein 10 (SPL10) from Arabidopsis thaliana (Mouse-ear cress).